The primary structure comprises 448 residues: Homogentisate 1,2-dioxygenase (448 aa).

His303 serves as the catalytic Proton acceptor. Fe cation contacts are provided by His346 and Glu352. Homogentisate is bound by residues Tyr361 and His382. Residue His382 participates in Fe cation binding.

Belongs to the homogentisate dioxygenase family. As to quaternary structure, hexamer; dimer of trimers. Fe cation serves as cofactor.

It carries out the reaction homogentisate + O2 = 4-maleylacetoacetate + H(+). It functions in the pathway amino-acid degradation; L-phenylalanine degradation; acetoacetate and fumarate from L-phenylalanine: step 4/6. Its function is as follows. Involved in the catabolism of homogentisate (2,5-dihydroxyphenylacetate or 2,5-OH-PhAc), a central intermediate in the degradation of phenylalanine and tyrosine. Catalyzes the oxidative ring cleavage of the aromatic ring of homogentisate to yield maleylacetoacetate. The chain is Homogentisate 1,2-dioxygenase from Rhodopseudomonas palustris (strain BisA53).